A 394-amino-acid chain; its full sequence is Protein maelstrom (394 aa).

The segment at residues 2 to 69 is a DNA-binding region (HMG box); sequence APKKQNGFMM…ARRDKRGSLN (68 aa). A disordered region spans residues 44–93; sequence TQQRGPYNSDAKDANAARRDKRGSLNGHGQVDKAQREAAESLMDKAQREA. Over residues 73-93 the composition is skewed to basic and acidic residues; it reads QVDKAQREAAESLMDKAQREA.

The protein belongs to the maelstrom family.

Its subcellular location is the cytoplasm. It localises to the nucleus. Functionally, involved both in the piRNA and miRNA metabolic processes. As a component of the meiotic nuage, plays a central role during oogenesis by repressing transposable elements and preventing their mobilization, which is essential for the germline integrity. Repression of transposable elements is mediated via the piRNA metabolic process, which mediates the repression of transposable elements during meiosis by forming complexes composed of piRNAs and Piwi proteins and governs the repression of transposons. As a nuclear component, it is required for proper differentiation in the germline stem cell (GSC) lineage by repressing microRNA-7 (miR-7), thereby acting as an indirect regulator of bag-of-marbles (Bam). Acts by binding to the promoter of miR-7 gene and repressing its expression; miR-7 repression alleviates the Bam repression by miR-7, thereby allowing differentiation in the germline stem cell (GSC) lineage. This chain is Protein maelstrom (mael), found in Drosophila sechellia (Fruit fly).